Consider the following 326-residue polypeptide: Isopenicillin N synthase (326 aa).

Isopenicillin N contacts are provided by R84, Y88, and Y186. N-[(5S)-5-amino-5-carboxypentanoyl]-L-cysteinyl-D-valine is bound by residues R84, Y88, Y186, H209, and D211. The Fe2OG dioxygenase domain maps to 183–283 (LIRYPFLENY…RLSIPFFANL (101 aa)). Positions 209, 211, and 265 each coordinate Fe(2+). Residue R274 coordinates 2-oxoglutarate. Isopenicillin N is bound at residue S276. S276 lines the N-[(5S)-5-amino-5-carboxypentanoyl]-L-cysteinyl-D-valine pocket.

It belongs to the iron/ascorbate-dependent oxidoreductase family. Requires Fe cation as cofactor. The cofactor is L-ascorbate.

The enzyme catalyses N-[(5S)-5-amino-5-carboxypentanoyl]-L-cysteinyl-D-valine + O2 = isopenicillin N + 2 H2O. It functions in the pathway antibiotic biosynthesis; penicillin G biosynthesis; penicillin G from L-alpha-aminoadipate and L-cysteine and L-valine: step 2/3. Functionally, removes, in the presence of oxygen, 4 hydrogen atoms from delta-L-(alpha-aminoadipyl)-L-cysteinyl-D-valine (ACV) to form the azetidinone and thiazolidine rings of isopenicillin. In Lysobacter lactamgenus, this protein is Isopenicillin N synthase (pcbC).